Consider the following 432-residue polypeptide: FMRFamide peptide receptor frpr-18 (432 aa).

Topologically, residues 1-8 (MESQQLMA) are extracellular. Residues 9–29 (CAILVIVLVGIFGNSLSFILF) traverse the membrane as a helical segment. Topologically, residues 30 to 42 (SRPHMRSSSVNVL) are cytoplasmic. The chain crosses the membrane as a helical span at residues 43–63 (LCALSFFDFSLLTLSIPIFVI). At 64 to 84 (PNLDLWANDLSLSTYMAYILK) the chain is on the extracellular side. A helical membrane pass occupies residues 85–105 (LIYPINLMMQTCSVYIMVMIT). Residues 106 to 128 (LERWVAVCRPLQVRVWCTPRKSR) are Cytoplasmic-facing. Residues 129–149 (NAILVIIVSAFLYNFVRFFEY) form a helical membrane-spanning segment. The Extracellular portion of the chain corresponds to 150 to 176 (RFVVTESGALYEKWLRDPGKHRWYYVG). The helical transmembrane segment at 177-197 (YYTILYIVTHFLVPFSVMAFA) threads the bilayer. Topologically, residues 198–225 (NGHVIVAMCKLSKTRQMLTRQQQREQST) are cytoplasmic. The helical transmembrane segment at 226–246 (TVMLLIVTFVFAICNTLPFLL) threads the bilayer. The Extracellular portion of the chain corresponds to 247–271 (NVSESIFPTLFQDESTRGLAYWLND). The helical transmembrane segment at 272–292 (LSNLLVVLNSGTTFIIYFTFS) threads the bilayer. The Cytoplasmic portion of the chain corresponds to 293 to 432 (EKYRQTLVFI…GEPDSPCQPC (140 aa)). Disordered stretches follow at residues 328–349 (ISSE…SSRS) and 388–411 (KLPS…GMPE).

This sequence belongs to the G-protein coupled receptor 1 family. Expressed in a subset of neurons in the head, midbody, and tail, including AIY, ASI, BAG, URA, CAN, I6, PVQ, DVA, RIM, and VC, and in the anal sphincter and intestinal muscles. Expression from the ASI neurons is involved in promoting arousal.

It is found in the cell membrane. In terms of biological role, G-protein coupled receptor for flp-2 neuropeptides. May act through the G(q) alpha type of G proteins. Involved in mediating arousal from the sleep-like state called lethargus, which occurs during molting between larval and adult stages, in part by regulating touch sensitivity, and working in concert with neuropeptide pdf-1. The polypeptide is FMRFamide peptide receptor frpr-18 (Caenorhabditis elegans).